The primary structure comprises 1238 residues: Anion exchange protein 2 (1238 aa).

Residues 1 to 238 (MSGTPRRPAS…YNLQERRRIG (238 aa)) form a disordered region. Residues 1–704 (MSGTPRRPAS…SDFRDALDPQ (704 aa)) lie on the Cytoplasmic side of the membrane. Composition is skewed to basic and acidic residues over residues 37 to 49 (DLHR…RFEE) and 58 to 75 (GGEE…EYHR). Composition is skewed to basic residues over residues 76-85 (QSSHHIHHPL) and 94-110 (RRRK…RRRP). A compositionally biased stretch (acidic residues) spans 120 to 133 (TIEEGEEDEDETSE). A phosphoserine mark is found at Ser132, Ser144, Ser170, and Ser172. The segment covering 141-154 (TDPSPASTPTSVQF) has biased composition (polar residues). Over residues 205-215 (GTAGGDDGGAS) the composition is skewed to gly residues. Residue Ser239 is modified to Phosphoserine. Thr253 carries the phosphothreonine modification. The residue at position 270 (Lys270) is an N6-methyllysine. Residues 277 to 315 (VPGVRRHLVRKNAKGSSQSSREGREPGPTPRTRPRAPHK) are disordered. Over residues 280-289 (VRRHLVRKNA) the composition is skewed to basic residues. Residue Ser439 is modified to Phosphoserine. Positions 445–466 (SLLGHHHTQGAESDPHVTEPLI) are disordered. 4 helical membrane passes run 705–728 (CLAA…GLLG), 734–771 (LIGV…LLVF), 791–813 (VWIG…SFLV), and 823–844 (IFAF…VKIF). The segment at 705-1238 (CLAAVIFIYF…DEYNEMPMPV (534 aa)) is membrane (anion exchange). Residues 845–897 (QEHPLHGCLASNSSEADGGKNTTWTEAAPTPGHGNTSSAEQAGVERPQGQPNT) are Extracellular-facing. Asn856, Asn865, and Asn879 each carry an N-linked (GlcNAc...) asparagine glycan. The span at 858–869 (SEADGGKNTTWT) shows a compositional bias: polar residues. The disordered stretch occupies residues 858 to 892 (SEADGGKNTTWTEAAPTPGHGNTSSAEQAGVERPQ). The helical transmembrane segment at 898–915 (ALLSLVLMAGTFFIAFFL) threads the bilayer. Residues 916–930 (RKFKNSRFFPGRIRR) are Cytoplasmic-facing. 5 helical membrane passes run 931–951 (VIGD…DYSI), 985–1007 (PFPV…LIFM), 1033–1054 (LLLI…LAAA), 1088–1133 (VTGL…IQFY), and 1160–1196 (MHLF…TVPL). Residue Cys1170 is the site of S-palmitoyl cysteine attachment.

Belongs to the anion exchanger (TC 2.A.31) family. Expressed in the cochlea (at protein level).

Its subcellular location is the apical cell membrane. It localises to the basolateral cell membrane. It catalyses the reaction hydrogencarbonate(in) + chloride(out) = hydrogencarbonate(out) + chloride(in). In terms of biological role, sodium-independent anion exchanger which mediates the electroneutral exchange of chloride for bicarbonate ions across the cell membrane. Plays an important role in osteoclast differentiation and function. Regulates bone resorption and calpain-dependent actin cytoskeleton organization in osteoclasts via anion exchange-dependent control of pH. Essential for intracellular pH regulation in CD8(+) T-cells upon CD3 stimulation, modulating CD8(+) T-cell response. In Cavia porcellus (Guinea pig), this protein is Anion exchange protein 2 (SLC4A2).